A 484-amino-acid chain; its full sequence is Transcription factor cghD (484 aa).

A DNA-binding region (zn(2)-C6 fungal-type) is located at residues 21–54 (CDRCRLQKLKCTVQSMESDGRMVCERCVRAKVPC). 4 disordered regions span residues 59–117 (RRRA…PTLA), 136–174 (TTAP…SGSS), 202–242 (PAST…FSTT), and 386–406 (HMHS…ELPS). The span at 64-76 (RPSDTKKQGDSST) shows a compositional bias: basic and acidic residues. The segment covering 77-107 (RRSTAPRTTNPEPTVLTPPLSTTSSTSEQTL) has biased composition (low complexity). Residues 202 to 213 (PASTSTSTGSPT) are compositionally biased toward low complexity.

Its subcellular location is the nucleus. Transcription factor that regulates the expression of the gene cluster that mediates the biosynthesis of the tetramic acid Sch210972, a potential anti-HIV fungal natural product that contains a decalin core. The polypeptide is Transcription factor cghD (Chaetomium globosum (strain ATCC 6205 / CBS 148.51 / DSM 1962 / NBRC 6347 / NRRL 1970) (Soil fungus)).